Here is a 130-residue protein sequence, read N- to C-terminus: Albumin-1 D (130 aa).

The signal sequence occupies residues 1–26; that stretch reads MASVKLASLIVLFATLGMFLTKNVGA. Disulfide bonds link cysteine 29–cysteine 46, cysteine 33–cysteine 48, and cysteine 41–cysteine 58. 2 propeptides span residues 64 to 69 and 123 to 130; these read VFLKAN and LLKSVSTA.

In terms of processing, the C-terminal glycine may be removed from PA1b. As to expression, major component of both the cotyledons and embryonic axes of mature seeds.

Its function is as follows. PA1b binds to basic 7S globulin (BG) and stimulates its phosphorylation activity. Involved in the signal transduction system to regulate the growth and differentiation as a hormone peptide. Toxic to various insects through binding to a high affinity binding site in the insect gut. The sequence is that of Albumin-1 D from Pisum sativum (Garden pea).